The sequence spans 93 residues: Small ribosomal subunit protein bS6 (93 aa).

It belongs to the bacterial ribosomal protein bS6 family.

Its function is as follows. Binds together with bS18 to 16S ribosomal RNA. The protein is Small ribosomal subunit protein bS6 (rpsF) of Treponema pallidum (strain Nichols).